The sequence spans 331 residues: Serine racemase (331 aa).

ATP contacts are provided by serine 34 and lysine 54. Lysine 59 functions as the Proton acceptor in the catalytic mechanism. At lysine 59 the chain carries N6-(pyridoxal phosphate)lysine. Residue threonine 81 participates in Ca(2+) binding. Residue serine 84 is the Proton acceptor of the active site. Asparagine 86 contributes to the pyridoxal 5'-phosphate binding site. Tyrosine 121 contacts ATP. Aspartate 178 provides a ligand contact to Mg(2+). Pyridoxal 5'-phosphate contacts are provided by glycine 186, glycine 187, and glycine 188. Residues glutamate 210, alanine 214, and aspartate 216 each coordinate Ca(2+). Residues glutamate 210, alanine 214, and aspartate 216 each contribute to the Mg(2+) site. Glutamate 210, alanine 214, and aspartate 216 together coordinate Mn(2+). Lysine 278 serves as a coordination point for ATP. A pyridoxal 5'-phosphate-binding site is contributed by serine 314. Asparagine 317 contacts ATP.

The protein belongs to the serine/threonine dehydratase family. As to quaternary structure, homodimer. The cofactor is Mg(2+). It depends on Mn(2+) as a cofactor. Ca(2+) is required as a cofactor. Requires pyridoxal 5'-phosphate as cofactor. In terms of tissue distribution, expressed in the whole plant.

It carries out the reaction L-serine = D-serine. The catalysed reaction is L-serine = pyruvate + NH4(+). The enzyme catalyses D-serine = pyruvate + NH4(+). Its activity is regulated as follows. Inhibited by hydroxylamine. Racemase activity is enhanced by Ca(2+), Mg(2+), Mn(2+), and is decreased by Ni(2+), Zn(2+). Hydratase activity is enhanced by Ca(2+), Mg(2+), Mn(2+), Cu(2+), Fe(2+), Ni(2+). In terms of biological role, catalyzes the synthesis of D-serine from L-serine. Has dehydratase activity towards both L-serine and D-serine. Displays high substrate specificity for L-serine, whereas L-alanine, L-arginine, and L-glutamine were poor substrates. In Arabidopsis thaliana (Mouse-ear cress), this protein is Serine racemase (SR).